The following is a 1535-amino-acid chain: Lysine-specific demethylase 5D (1535 aa).

The JmjN domain occupies 14 to 55; that stretch reads CPVFEPSWAEFQDPLGYIAKIRPIAEKSGICKIRPPADWQPP. One can recognise an ARID domain in the interval 79-169; it reads TRVKLNYLDQ…IIYPYEMFQS (91 aa). The interval 192–227 is disordered; sequence PHSIPLRQSVQPSKFSSYSRRAKRLQPDPEPTEEDI. The segment covering 197-210 has biased composition (polar residues); sequence LRQSVQPSKFSSYS. Glycyl lysine isopeptide (Lys-Gly) (interchain with G-Cter in SUMO2) cross-links involve residues Lys205, Lys229, Lys244, and Lys272. Phosphoserine is present on residues Ser291 and Ser307. The PHD-type 1 zinc-finger motif lies at 314-364; sequence SYICQVCSRGDEDDKLLFCDGCDDNYHIFCLLPPLPEIPRGIWRCPKCILA. Tyr430 contacts 2-oxoglutarate. Residues 458–624 enclose the JmjC domain; sequence EYATSGWNLN…AGRQCIEHYR (167 aa). His504 and Glu506 together coordinate Fe cation. Residues Ser512, Asn514, and Lys522 each contribute to the 2-oxoglutarate site. Residue His592 coordinates Fe cation. A C5HC2 zinc finger spans residues 697 to 749; the sequence is CIKCKTTCFLSALACYDCPDGLVCLSHINDLCKCSSSRQYLRYRYTLDELPTM. Phosphoserine is present on Ser884. The segment at 1174-1235 adopts a PHD-type 2 zinc-finger fold; sequence ICVCGQVPAG…DTKFLCPLCM (62 aa). Ser1342 carries the phosphoserine modification. Residues 1425-1519 form a disordered region; it reads HQGSRTRSRA…KDSGSSAACP (95 aa). Over residues 1428–1441 the composition is skewed to basic residues; that stretch reads SRTRSRALERRRRQ. The segment covering 1473–1487 has biased composition (basic and acidic residues); that stretch reads GREEEHYQEKADREN. Residues 1490–1517 are compositionally biased toward polar residues; that stretch reads LTPSTDHSPSLKGNQNSLQHKDSGSSAA.

Belongs to the JARID1 histone demethylase family. In terms of assembly, interacts withPCGF6, MSH5, ZMYND8, AR. Requires L-ascorbate as cofactor. Fe(2+) is required as a cofactor.

The protein localises to the nucleus. The catalysed reaction is N(6),N(6),N(6)-trimethyl-L-lysyl(4)-[histone H3] + 3 2-oxoglutarate + 3 O2 = L-lysyl(4)-[histone H3] + 3 formaldehyde + 3 succinate + 3 CO2. Functionally, histone demethylase that specifically demethylates 'Lys-4' of histone H3, thereby playing a central role in histone code. Does not demethylate histone H3 'Lys-9', H3 'Lys-27', H3 'Lys-36', H3 'Lys-79' or H4 'Lys-20'. Demethylates trimethylated and dimethylated but not monomethylated H3 'Lys-4'. May play a role in spermatogenesis. Involved in transcriptional repression of diverse metastasis-associated genes; in this function seems to cooperate with ZMYND8. Suppresses prostate cancer cell invasion. Regulates androgen receptor (AR) transcriptional activity by demethylating H3K4me3 active transcription marks. This is Lysine-specific demethylase 5D (KDM5D) from Pan troglodytes (Chimpanzee).